Consider the following 436-residue polypeptide: Succinyl-CoA:glutarate CoA-transferase (436 aa).

A mitochondrion-targeting transit peptide spans 1–8 (MLWMLARA). D203 functions as the Nucleophile in the catalytic mechanism. Residues K392 and K423 each carry the N6-acetyllysine modification.

Belongs to the CoA-transferase III family.

It is found in the mitochondrion. It carries out the reaction glutarate + succinyl-CoA = glutaryl-CoA + succinate. It catalyses the reaction 3-hydroxy-3-methylglutarate + succinyl-CoA = (3S)-3-hydroxy-3-methylglutaryl-CoA + succinate. The enzyme catalyses 3-hydroxy-3-methylglutarate + glutaryl-CoA = (3S)-3-hydroxy-3-methylglutaryl-CoA + glutarate. The catalysed reaction is hexanedioate + glutaryl-CoA = hexanedioyl-CoA + glutarate. It carries out the reaction itaconate + glutaryl-CoA = itaconyl-CoA + glutarate. It catalyses the reaction itaconate + succinyl-CoA = itaconyl-CoA + succinate. Functionally, coenzyme A (CoA) transferase that reversibly catalyzes the transfer of a CoA moiety from a dicarboxyl-CoA to a dicarboxylate in a metabolite recycling process. Displays preference for succinyl-CoA and glutarate-CoA as dicarboxyl-CoA donors and glutarate, succinate, adipate/hexanedioate, itaconate and 3-hydroxy-3-methylglutarate as dicarboxylate acceptors. Acts on intermediates or end products of lysine and tryptophan degradation pathway, in particular catalyzes succinyl-CoA-dependent reesterification of free glutarate into glutaryl-CoA to prevent renal excretion of glutarate. Upon inflammation, may convert macrophage-derived itaconate to itaconyl-CoA in erythroid precursors where it negatively regulates the TCA cycle and heme synthesis to limit erythroid differentiation in the context of stress erythropoiesis. The protein is Succinyl-CoA:glutarate CoA-transferase of Mus musculus (Mouse).